A 500-amino-acid chain; its full sequence is Tektin-like protein 1 (500 aa).

Positions 1–25 (MPVLLPSTDRDQDSRVGAPEWHQAA) are disordered. The residue at position 14 (Ser14) is a Phosphoserine. The stretch at 198-229 (MLVWEREELKSMKRKMEKDMERSEALLKALAS) forms a coiled coil. Residues 265–286 (VDITRPPTPRTQGLKTPPPDPV) are disordered. Tyr372 carries the phosphotyrosine modification. A coiled-coil region spans residues 422–448 (LTRHNLQMEKNLKELRTTHDNLAWSLN).

In terms of assembly, microtubule inner protein component of sperm flagellar doublet microtubules.

The protein localises to the cytoplasm. It is found in the cytoskeleton. It localises to the flagellum axoneme. Its function is as follows. Microtubule inner protein (MIP) part of the dynein-decorated doublet microtubules (DMTs) in sperm flagellar axoneme, which is required for motile flagellum beating. Forms an extensive interaction network cross-linking the lumen of axonemal doublet microtubules. The polypeptide is Tektin-like protein 1 (Rattus norvegicus (Rat)).